Reading from the N-terminus, the 146-residue chain is ATP synthase epsilon chain (146 aa).

Positions 92–116 are enriched in basic and acidic residues; sequence ISVDQARRDRDSLRKKLNEHERSEQ. The disordered stretch occupies residues 92 to 120; sequence ISVDQARRDRDSLRKKLNEHERSEQDPEV.

It belongs to the ATPase epsilon chain family. F-type ATPases have 2 components, CF(1) - the catalytic core - and CF(0) - the membrane proton channel. CF(1) has five subunits: alpha(3), beta(3), gamma(1), delta(1), epsilon(1). CF(0) has three main subunits: a, b and c.

The protein localises to the cell membrane. In terms of biological role, produces ATP from ADP in the presence of a proton gradient across the membrane. The polypeptide is ATP synthase epsilon chain (Cutibacterium acnes (strain DSM 16379 / KPA171202) (Propionibacterium acnes)).